A 357-amino-acid polypeptide reads, in one-letter code: Phenylalanine--tRNA ligase alpha subunit (357 aa).

Glutamate 258 is a Mg(2+) binding site.

Belongs to the class-II aminoacyl-tRNA synthetase family. Phe-tRNA synthetase alpha subunit type 1 subfamily. Tetramer of two alpha and two beta subunits. Mg(2+) serves as cofactor.

Its subcellular location is the cytoplasm. It carries out the reaction tRNA(Phe) + L-phenylalanine + ATP = L-phenylalanyl-tRNA(Phe) + AMP + diphosphate + H(+). The sequence is that of Phenylalanine--tRNA ligase alpha subunit from Caulobacter vibrioides (strain ATCC 19089 / CIP 103742 / CB 15) (Caulobacter crescentus).